We begin with the raw amino-acid sequence, 157 residues long: 2-amino-4-hydroxy-6-hydroxymethyldihydropteridine pyrophosphokinase (157 aa).

Belongs to the HPPK family.

The enzyme catalyses 6-hydroxymethyl-7,8-dihydropterin + ATP = (7,8-dihydropterin-6-yl)methyl diphosphate + AMP + H(+). It functions in the pathway cofactor biosynthesis; tetrahydrofolate biosynthesis; 2-amino-4-hydroxy-6-hydroxymethyl-7,8-dihydropteridine diphosphate from 7,8-dihydroneopterin triphosphate: step 4/4. In terms of biological role, catalyzes the transfer of pyrophosphate from adenosine triphosphate (ATP) to 6-hydroxymethyl-7,8-dihydropterin, an enzymatic step in folate biosynthesis pathway. The polypeptide is 2-amino-4-hydroxy-6-hydroxymethyldihydropteridine pyrophosphokinase (folK) (Campylobacter jejuni subsp. jejuni serotype O:2 (strain ATCC 700819 / NCTC 11168)).